The sequence spans 82 residues: Putative defensin-like protein 134 (82 aa).

Positions 1-26 (MEVRSLNLCFLLVLVLLMSPAPTAVA) are cleaved as a signal peptide. Disulfide bonds link cysteine 32-cysteine 79, cysteine 42-cysteine 68, cysteine 47-cysteine 74, and cysteine 51-cysteine 76.

The protein belongs to the DEFL family.

The protein resides in the secreted. The polypeptide is Putative defensin-like protein 134 (Arabidopsis thaliana (Mouse-ear cress)).